The primary structure comprises 301 residues: 33 kDa chaperonin (301 aa).

2 disulfide bridges follow: cysteine 239-cysteine 241 and cysteine 272-cysteine 275.

It belongs to the HSP33 family. Under oxidizing conditions two disulfide bonds are formed involving the reactive cysteines. Under reducing conditions zinc is bound to the reactive cysteines and the protein is inactive.

The protein localises to the cytoplasm. Its function is as follows. Redox regulated molecular chaperone. Protects both thermally unfolding and oxidatively damaged proteins from irreversible aggregation. Plays an important role in the bacterial defense system toward oxidative stress. The chain is 33 kDa chaperonin from Trichormus variabilis (strain ATCC 29413 / PCC 7937) (Anabaena variabilis).